Here is a 444-residue protein sequence, read N- to C-terminus: E3 ubiquitin-protein ligase RNFT2 (444 aa).

Residues 1–181 are Extracellular-facing; sequence MWLFTVNQVL…ILLAKLCFQH (181 aa). Disordered stretches follow at residues 13 to 41 and 92 to 149; these read MQRR…ASVD and PASR…PGTP. The span at 107-121 shows a compositional bias: basic residues; sequence YHHRQPHHHFHHGGH. Residues 131 to 140 are compositionally biased toward basic and acidic residues; that stretch reads GGDHRGHSEE. A helical transmembrane segment spans residues 182–202; the sequence is KLGIAVCIGMASTFAYANSTL. Topologically, residues 203 to 214 are cytoplasmic; the sequence is REQVSLKEKRSV. A helical transmembrane segment spans residues 215–235; it reads LVILWILAFLAGNTLYVLYTF. The Extracellular portion of the chain corresponds to 236–255; the sequence is SSQQLYNSLIFLKPNLEMLD. Residues 256–276 form a helical membrane-spanning segment; that stretch reads FFDLLWIVGIADFVLKYITIA. Residues 277 to 329 lie on the Cytoplasmic side of the membrane; the sequence is LKCLIVALPKIILAVKSKGKFYLVIEELSQLFRSLVPIQLWYKYIMGDDSSNS. The chain crosses the membrane as a helical span at residues 330–350; the sequence is YFLGGVLIVLYSLCKSFDICG. Residues 351–444 are Extracellular-facing; the sequence is RVGGVRKALK…GATSAHFQVY (94 aa). The RING-type zinc-finger motif lies at 384-422; the sequence is CAICQAEFREPLILLCQHVFCEECLCLWLDRERTCPLCR.

It localises to the membrane. E3 ubiquitin-protein ligase that negatively regulates IL3-dependent cellular responses through IL3RA ubiquitination and degradation by the proteasome, having an anti-inflammatory effect. In Homo sapiens (Human), this protein is E3 ubiquitin-protein ligase RNFT2.